The sequence spans 217 residues: Protein-L-isoaspartate O-methyltransferase (217 aa).

Residue Ser61 is part of the active site.

The protein belongs to the methyltransferase superfamily. L-isoaspartyl/D-aspartyl protein methyltransferase family.

It is found in the cytoplasm. It catalyses the reaction [protein]-L-isoaspartate + S-adenosyl-L-methionine = [protein]-L-isoaspartate alpha-methyl ester + S-adenosyl-L-homocysteine. Functionally, catalyzes the methyl esterification of L-isoaspartyl residues in peptides and proteins that result from spontaneous decomposition of normal L-aspartyl and L-asparaginyl residues. It plays a role in the repair and/or degradation of damaged proteins. The polypeptide is Protein-L-isoaspartate O-methyltransferase (Brucella anthropi (strain ATCC 49188 / DSM 6882 / CCUG 24695 / JCM 21032 / LMG 3331 / NBRC 15819 / NCTC 12168 / Alc 37) (Ochrobactrum anthropi)).